We begin with the raw amino-acid sequence, 119 residues long: Ribonuclease P protein component (119 aa).

Belongs to the RnpA family. As to quaternary structure, consists of a catalytic RNA component (M1 or rnpB) and a protein subunit.

The enzyme catalyses Endonucleolytic cleavage of RNA, removing 5'-extranucleotides from tRNA precursor.. Its function is as follows. RNaseP catalyzes the removal of the 5'-leader sequence from pre-tRNA to produce the mature 5'-terminus. It can also cleave other RNA substrates such as 4.5S RNA. The protein component plays an auxiliary but essential role in vivo by binding to the 5'-leader sequence and broadening the substrate specificity of the ribozyme. The chain is Ribonuclease P protein component from Photorhabdus laumondii subsp. laumondii (strain DSM 15139 / CIP 105565 / TT01) (Photorhabdus luminescens subsp. laumondii).